A 617-amino-acid chain; its full sequence is Protein DWARF AND LOW-TILLERING (617 aa).

Disordered regions lie at residues 29 to 92 (KRGS…HDED) and 159 to 206 (PSLA…GVPA). Residues 171-187 (KSPSDSSSSSGTDGGSS) are compositionally biased toward low complexity. In terms of domain architecture, GRAS spans 208-594 (GQAEREALEL…QPLYTVTAWT (387 aa)). A leucine repeat I (LRI) region spans residues 215–295 (LELVRALTAC…LTDDAFGGGD (81 aa)). The tract at residues 301 to 366 (LRILNAITPI…VPPAHVRITG (66 aa)) is VHIID. The VHIID signature appears at 332–336 (VHVID). Positions 376 to 408 (ETGARLARVAAALGLAFEFHAVVDRLEDVRLWM) are leucine repeat II (LRII). Residues 417–508 (VAVNCVLAMH…EEMFAREIRN (92 aa)) form a PFYRE region. The SAW stretch occupies residues 511-594 (AFEGPERFER…QPLYTVTAWT (84 aa)). The disordered stretch occupies residues 596-617 (AGDGAGGSTVSASTTASHSQQS). Residues 603–617 (STVSASTTASHSQQS) show a composition bias toward low complexity.

This sequence belongs to the GRAS family. As to quaternary structure, interacts with GSK2. Interacts with SMOS1 (via C-terminus). Post-translationally, phosphorylated on serine and threonine residues by GSK2. Dephosphorylated during response to brassinosteroid. In terms of tissue distribution, expressed in the shoot apical meristem (SAM) and elongating cells of young seedlings. Expressed in leaf joints, culms, internodes, stems, young panicles, primary roots and lateral roots.

Its subcellular location is the nucleus. Probable transcription factor that acts as a positive regulator of brassinosteroid (BR) signaling. Functions downstream of BRI1 and GSK2 to modulate BR responses. Acts as a direct target of GSK2 kinase to mediate BR responses. Involved in feedback inhibition of BR biosynthetic genes. Repressed by BZR1. Cooperatively functions in a transactivating complex with SMOS1 to enhance the transcription of the SMOS1 target PHI-1, and regulate plant organ size. Interaction between SMOS1 and DLT is a crosstalk point for auxin and brassinosteroid signaling. This chain is Protein DWARF AND LOW-TILLERING, found in Oryza sativa subsp. japonica (Rice).